A 63-amino-acid chain; its full sequence is Race-specific elicitor A9 (63 aa).

A signal peptide spans 1-23 (MKLSLLSVELALLIATTLPLCWA). The propeptide occupies 24–35 (AALPVGLGVGLD). 3 disulfide bridges follow: cysteine 37-cysteine 51, cysteine 41-cysteine 54, and cysteine 47-cysteine 61.

Functionally, this necrosis-inducing peptide induces a hypersensitive response on Cf-9 tomato genotypes. Race-specific elicitors are compounds which only induce defense responses in genotypes of host plants which are resistant to the pathogenic race that produces the elicitor, but not in susceptible genotypes. In Passalora fulva (Tomato leaf mold), this protein is Race-specific elicitor A9 (AVR9).